A 313-amino-acid polypeptide reads, in one-letter code: Porphobilinogen deaminase (313 aa).

S-(dipyrrolylmethanemethyl)cysteine is present on Cys242.

Belongs to the HMBS family. As to quaternary structure, monomer. It depends on dipyrromethane as a cofactor.

It catalyses the reaction 4 porphobilinogen + H2O = hydroxymethylbilane + 4 NH4(+). Its pathway is porphyrin-containing compound metabolism; protoporphyrin-IX biosynthesis; coproporphyrinogen-III from 5-aminolevulinate: step 2/4. In terms of biological role, tetrapolymerization of the monopyrrole PBG into the hydroxymethylbilane pre-uroporphyrinogen in several discrete steps. The sequence is that of Porphobilinogen deaminase from Erwinia tasmaniensis (strain DSM 17950 / CFBP 7177 / CIP 109463 / NCPPB 4357 / Et1/99).